A 477-amino-acid polypeptide reads, in one-letter code: Ribulose bisphosphate carboxylase large chain (477 aa).

Residues 1–2 (MS) constitute a propeptide that is removed on maturation. Pro-3 carries the post-translational modification N-acetylproline. The residue at position 14 (Lys-14) is an N6,N6,N6-trimethyllysine. 2 residues coordinate substrate: Asn-123 and Thr-173. Lys-175 serves as the catalytic Proton acceptor. Residue Lys-177 coordinates substrate. Mg(2+) is bound by residues Lys-201, Asp-203, and Glu-204. At Lys-201 the chain carries N6-carboxylysine. His-294 (proton acceptor) is an active-site residue. Substrate is bound by residues Arg-295, His-327, and Ser-379.

The protein belongs to the RuBisCO large chain family. Type I subfamily. In terms of assembly, heterohexadecamer of 8 large chains and 8 small chains; disulfide-linked. The disulfide link is formed within the large subunit homodimers. It depends on Mg(2+) as a cofactor. In terms of processing, the disulfide bond which can form in the large chain dimeric partners within the hexadecamer appears to be associated with oxidative stress and protein turnover.

It is found in the plastid. Its subcellular location is the chloroplast. It catalyses the reaction 2 (2R)-3-phosphoglycerate + 2 H(+) = D-ribulose 1,5-bisphosphate + CO2 + H2O. The enzyme catalyses D-ribulose 1,5-bisphosphate + O2 = 2-phosphoglycolate + (2R)-3-phosphoglycerate + 2 H(+). In terms of biological role, ruBisCO catalyzes two reactions: the carboxylation of D-ribulose 1,5-bisphosphate, the primary event in carbon dioxide fixation, as well as the oxidative fragmentation of the pentose substrate in the photorespiration process. Both reactions occur simultaneously and in competition at the same active site. The chain is Ribulose bisphosphate carboxylase large chain (rbcL) from Solanum lycopersicum (Tomato).